A 261-amino-acid polypeptide reads, in one-letter code: Rho-related GTP-binding protein RhoU (261 aa).

The tract at residues 1–48 (MAPQQGRPALPARCEPPAAPPVPPRRERGGRGARGPGVSGGRGRAGGA) is disordered. Residues 7–16 (RPALPARCEP) are compositionally biased toward low complexity. Residues 32 to 48 (GARGPGVSGGRGRAGGA) show a composition bias toward gly residues. Residues 59 to 66 (GDGAVGKT), 106 to 110 (DTAGQ), and 164 to 167 (TQSD) contribute to the GTP site. Glycyl lysine isopeptide (Lys-Gly) (interchain with G-Cter in ubiquitin) cross-links involve residues K180 and K251. C259 is lipidated: S-palmitoyl cysteine.

It belongs to the small GTPase superfamily. Rho family. In terms of assembly, interacts with PAK1. Interacts with PAK3. Interacts with ARHGAP30 in a GTP-independent manner. In its GTP-loaded conformation, interacts with ARHGAP31. Interacts with PTK2B/PYK2. Interacts with PAK4; interaction protects RHOU from ubiquitination and subsequent degradation. It depends on Mg(2+) as a cofactor. In terms of processing, tyrosine phosphorylated by SRC in response to PTK2B/PYK2 activation. Ubiquitinated. 'Lys-48'-linked ubiquitination at Lys-180 and Lys-251 by the ECS(RAB40A) complex leading to its degradation.

The protein localises to the cell membrane. It is found in the golgi apparatus membrane. Its subcellular location is the cell junction. It localises to the focal adhesion. The protein resides in the cell projection. The protein localises to the podosome. Its function is as follows. Binds to and activates protein kinase PAK1. Plays a role in the regulation of cell morphology, cytoskeletal organization and focal adhesion assembly during cell migration. Also stimulates quiescent cells to reenter the cell cycle. Has no detectable GTPase activity but its high intrinsic guanine nucleotide exchange activity suggests it is constitutively GTP-bound. The chain is Rho-related GTP-binding protein RhoU from Mus musculus (Mouse).